Here is a 347-residue protein sequence, read N- to C-terminus: 3-keto-steroid reductase ERG27 (347 aa).

Leu-15, Thr-38, and Arg-44 together coordinate NADP(+). Active-site proton donor residues include Ser-179 and Tyr-202. Residues Tyr-202, Lys-206, and Ser-237 each coordinate NADP(+). The Lowers pKa of active site Tyr role is filled by Lys-206. A Phosphothreonine modification is found at Thr-345.

It belongs to the short-chain dehydrogenases/reductases (SDR) family. ERG27 subfamily. In terms of assembly, heterotetramer of ERG25, ERG26, ERG27 and ERG28. ERG28 acts as a scaffold to tether ERG27 and other 4,4-demethylation-related enzymes, forming a demethylation enzyme complex, in the endoplasmic reticulum. Interacts with ERG25 and ERG28. Also interacts with ERG7, but only in lipid particles.

Its subcellular location is the endoplasmic reticulum membrane. The protein localises to the lipid droplet. The enzyme catalyses 3-dehydro-4alpha-methylzymosterol + NADPH + H(+) = 4alpha-methylzymosterol + NADP(+). It participates in steroid biosynthesis; zymosterol biosynthesis; zymosterol from lanosterol: step 5/6. 3-keto-steroid reductase; part of the third module of ergosterol biosynthesis pathway that includes the late steps of the pathway. ERG27 is a catalytic component of the C-4 demethylation complex that catalyze the reduction of the keto group on the C-3. The third module or late pathway involves the ergosterol synthesis itself through consecutive reactions that mainly occur in the endoplasmic reticulum (ER) membrane. Firstly, the squalene synthase ERG9 catalyzes the condensation of 2 farnesyl pyrophosphate moieties to form squalene, which is the precursor of all steroids. Squalene synthase is crucial for balancing the incorporation of farnesyl diphosphate (FPP) into sterol and nonsterol isoprene synthesis. Secondly, the squalene epoxidase ERG1 catalyzes the stereospecific oxidation of squalene to (S)-2,3-epoxysqualene, which is considered to be a rate-limiting enzyme in steroid biosynthesis. Then, the lanosterol synthase ERG7 catalyzes the cyclization of (S)-2,3 oxidosqualene to lanosterol, a reaction that forms the sterol core. In the next steps, lanosterol is transformed to zymosterol through a complex process involving various demethylation, reduction and desaturation reactions. The lanosterol 14-alpha-demethylase ERG11 (also known as CYP51) catalyzes C14-demethylation of lanosterol to produce 4,4'-dimethyl cholesta-8,14,24-triene-3-beta-ol, which is critical for ergosterol biosynthesis. The C-14 reductase ERG24 reduces the C14=C15 double bond of 4,4-dimethyl-cholesta-8,14,24-trienol to produce 4,4-dimethyl-cholesta-8,24-dienol. 4,4-dimethyl-cholesta-8,24-dienol is substrate of the C-4 demethylation complex ERG25-ERG26-ERG27 in which ERG25 catalyzes the three-step monooxygenation required for the demethylation of 4,4-dimethyl and 4alpha-methylsterols, ERG26 catalyzes the oxidative decarboxylation that results in a reduction of the 3-beta-hydroxy group at the C-3 carbon to an oxo group, and ERG27 is responsible for the reduction of the keto group on the C-3. ERG28 has a role as a scaffold to help anchor ERG25, ERG26 and ERG27 to the endoplasmic reticulum and ERG29 regulates the activity of the iron-containing C4-methylsterol oxidase ERG25. Then, the sterol 24-C-methyltransferase ERG6 catalyzes the methyl transfer from S-adenosyl-methionine to the C-24 of zymosterol to form fecosterol. The C-8 sterol isomerase ERG2 catalyzes the reaction which results in unsaturation at C-7 in the B ring of sterols and thus converts fecosterol to episterol. The sterol-C5-desaturase ERG3 then catalyzes the introduction of a C-5 double bond in the B ring to produce 5-dehydroepisterol. The C-22 sterol desaturase ERG5 further converts 5-dehydroepisterol into ergosta-5,7,22,24(28)-tetraen-3beta-ol by forming the C-22(23) double bond in the sterol side chain. Finally, ergosta-5,7,22,24(28)-tetraen-3beta-ol is substrate of the C-24(28) sterol reductase ERG4 to produce ergosterol. Its function is as follows. Facilitates the association of ERG7 with lipid particles preventing its digestion in the endoplasmic reticulum and the lipid particles. The sequence is that of 3-keto-steroid reductase ERG27 from Saccharomyces cerevisiae (strain ATCC 204508 / S288c) (Baker's yeast).